We begin with the raw amino-acid sequence, 493 residues long: Cysteine--tRNA ligase (493 aa).

Residue Cys-29 participates in Zn(2+) binding. The short motif at 31-41 (VTVYDYCHIGH) is the 'HIGH' region element. Residues Cys-209, His-234, and Glu-238 each contribute to the Zn(2+) site. A 'KMSKS' region motif is present at residues 266 to 270 (KMSKS). Lys-269 is an ATP binding site.

It belongs to the class-I aminoacyl-tRNA synthetase family. Monomer. The cofactor is Zn(2+).

It localises to the cytoplasm. It carries out the reaction tRNA(Cys) + L-cysteine + ATP = L-cysteinyl-tRNA(Cys) + AMP + diphosphate. In Pelobacter propionicus (strain DSM 2379 / NBRC 103807 / OttBd1), this protein is Cysteine--tRNA ligase.